We begin with the raw amino-acid sequence, 500 residues long: L-arabinose isomerase (500 aa).

The Mn(2+) site is built by E306, E333, H350, and H450.

It belongs to the arabinose isomerase family. In terms of assembly, homohexamer. The cofactor is Mn(2+).

It catalyses the reaction beta-L-arabinopyranose = L-ribulose. It participates in carbohydrate degradation; L-arabinose degradation via L-ribulose; D-xylulose 5-phosphate from L-arabinose (bacterial route): step 1/3. In terms of biological role, catalyzes the conversion of L-arabinose to L-ribulose. The sequence is that of L-arabinose isomerase from Escherichia coli O157:H7.